The chain runs to 94 residues: Small ubiquitin-related modifier 3-like (94 aa).

Residue K11 forms a Glycyl lysine isopeptide (Lys-Gly) (interchain with G-Cter in SUMO) linkage. A Ubiquitin-like domain is found at D15–G92. Residue G92 forms a Glycyl lysine isopeptide (Gly-Lys) (interchain with K-? in acceptor proteins) linkage. Residues S93–C94 constitute a propeptide that is removed on maturation.

Belongs to the ubiquitin family. SUMO subfamily. Interacts with sae2 and ube2i. Covalently attached to a number of proteins. Post-translationally, polymeric chains can be formed through Lys-11 cross-linking. In terms of processing, cleavage of precursor form by a sentrin-specific protease is necessary for function.

The protein resides in the cytoplasm. It is found in the nucleus. The protein localises to the PML body. Functionally, ubiquitin-like protein which can be covalently attached to target lysines either as a monomer or as a lysine-linked polymer. Does not seem to be involved in protein degradation and may function as an antagonist of ubiquitin in the degradation process. Plays a role in a number of cellular processes such as nuclear transport, DNA replication and repair, mitosis and signal transduction. Covalent attachment to its substrates requires prior activation by the E1 complex sae1-sae2 and linkage to the E2 enzyme ube2i. This is Small ubiquitin-related modifier 3-like (sumo3l) from Danio rerio (Zebrafish).